A 353-amino-acid polypeptide reads, in one-letter code: MEYSWLENKLQEINRKCIQINNKKSNNDSLNMIIGKLIDVMKDTSVLFKTLYERIIFNGSYYNNLKISKADEYDLDLILVLPVALETVLMLTPEAGYVDVKIDISKIKKLAYYRDILTPLEKLCENGIFSSLKIHSWFEGLVQKSLNIINASKYFPQYKLDMYKSGPAVTLTVHTPFSSYDMDLVPCLKLDKSLYPKGYKKQNCNHIYAVSKPNKDKEWRLSFIEQELSILRDNGHVKPAIRLLKFLRDQRDHKLIKSYFIVTVAMWDLETTNFNGKSLSFAFMTLLESLYKHICERKIPFYWNPNLNLLNKCHRDYLFNLENQLLNILKKLRSSNSNPNVLNEVFNFDIQES.

Residues S60 and 72-74 (EYD) contribute to the ATP site. Mg(2+) contacts are provided by E72, D74, and D183. D183 is a GTP binding site. ATP is bound at residue K245. L269 and E270 together coordinate Mn(2+).

The protein belongs to the mab-21 family. It depends on Mg(2+) as a cofactor. The cofactor is Mn(2+).

It catalyses the reaction GTP + ATP = 2',3'-cGAMP + 2 diphosphate. It carries out the reaction GTP + ATP = pppGp(2'-5')A + diphosphate. The catalysed reaction is pppGp(2'-5')A = 2',3'-cGAMP + diphosphate. Functionally, nucleotidyltransferase that catalyzes the formation of cyclic GMP-AMP (2',3'-cGAMP) from ATP and GTP and plays a key role in innate immunity. Acts as a key sensor of double-stranded RNA (dsRNA), the presence of dsRNA in the cytoplasm being a danger signal that triggers the immune responses. Directly binds dsRNA, activating the nucleotidyltransferase activity, leading to synthesis of 2',3'-cGAMP, a second messenger that binds to and activates Sting, thereby triggering the immune response via activation of the NF-kappa-B transcription factor. This chain is Cyclic GMP-AMP synthase-like receptor, found in Nicrophorus vespilloides (Boreal carrion beetle).